A 273-amino-acid polypeptide reads, in one-letter code: NAD-dependent protein deacylase (273 aa).

Residues Arg-20 to Gly-272 enclose the Deacetylase sirtuin-type domain. An NAD(+)-binding site is contributed by Gly-48–Trp-67. Substrate contacts are provided by Tyr-92 and Arg-95. Gln-129–Asp-132 serves as a coordination point for NAD(+). His-147 serves as the catalytic Proton acceptor. Zn(2+)-binding residues include Cys-155 and Cys-174. Residues Gly-214 to Ser-216, Asn-240 to Glu-242, and Ala-258 each bind NAD(+).

This sequence belongs to the sirtuin family. Class III subfamily. Zn(2+) is required as a cofactor.

Its subcellular location is the cytoplasm. It carries out the reaction N(6)-acetyl-L-lysyl-[protein] + NAD(+) + H2O = 2''-O-acetyl-ADP-D-ribose + nicotinamide + L-lysyl-[protein]. The catalysed reaction is N(6)-succinyl-L-lysyl-[protein] + NAD(+) + H2O = 2''-O-succinyl-ADP-D-ribose + nicotinamide + L-lysyl-[protein]. It catalyses the reaction N(6)-(2-hydroxyisobutanoyl)-L-lysyl-[protein] + NAD(+) + H2O = 2''-O-(2-hydroxyisobutanoyl)-ADP-D-ribose + nicotinamide + L-lysyl-[protein]. Functionally, NAD-dependent lysine deacetylase that specifically removes acetyl groups on target proteins. Also acts as a protein-lysine deacylase by mediating protein desuccinylation and de-2-hydroxyisobutyrylation. Modulates the activities of several proteins which are inactive in their acylated form. The protein is NAD-dependent protein deacylase of Salmonella typhi.